We begin with the raw amino-acid sequence, 769 residues long: Signal transducer and activator of transcription 3.1 (769 aa).

The short motif at 150-162 (DVRKKVQDLEQKM) is the Essential for nuclear import element. Residues 580–670 (WNEGYIMGFI…DATNILVSPL (91 aa)) enclose the SH2 domain. S728 carries the post-translational modification Phosphoserine; by NLK.

Belongs to the transcription factor STAT family. Forms a homodimer or a heterodimer with a related family member, such as stat1. Interacts with nlk.2. Post-translationally, phosphorylation of both tyrosine and serine residues, together with dimerization, is required for mesoderm induction.

Its subcellular location is the cytoplasm. It is found in the nucleus. Functionally, transcription factor that binds to target promoter sequences and activates transcription upon il6st/gp130 stimulation. Mediates ventralization of embryos, at least in part via inhibition of smad2 signaling. Required for hairy2 to induce dll1/delta1 and promote neural crest cell proliferation and differentiation. Involved in TGFbeta-mediated mesoderm induction in early embryos, acting downstream of map3k7/tak1 and nlk.2. This chain is Signal transducer and activator of transcription 3.1 (stat3.1), found in Xenopus laevis (African clawed frog).